Here is a 141-residue protein sequence, read N- to C-terminus: Hemoglobin subunit alpha-1 (141 aa).

The Globin domain occupies 1–141 (VLTEDDKNHI…VAKTLVAHYR (141 aa)). H58 serves as a coordination point for O2. Heme b is bound at residue H87.

It belongs to the globin family. In terms of assembly, heterotetramer of two alpha chains and two beta chains. Red blood cells.

Involved in oxygen transport from the lung to the various peripheral tissues. In Iguana iguana (Common iguana), this protein is Hemoglobin subunit alpha-1.